The following is a 131-amino-acid chain: Superoxide dismutase [Ni] (131 aa).

Positions 1-14 are excised as a propeptide; it reads MLSRLFAPKVTVSA. Positions 15, 16, and 20 each coordinate Ni(2+).

This sequence belongs to the nickel superoxide dismutase family. In terms of assembly, homohexamer. The hexameric protein has a roughly the shape of a hollow sphere with an outer diameter of 60 angstroms and a large interior cavity. Requires Ni(2+) as cofactor.

It is found in the cytoplasm. It carries out the reaction 2 superoxide + 2 H(+) = H2O2 + O2. The sequence is that of Superoxide dismutase [Ni] (sodN) from Streptomyces coelicolor (strain ATCC BAA-471 / A3(2) / M145).